The following is a 338-amino-acid chain: Methionine import ATP-binding protein MetN (338 aa).

In terms of domain architecture, ABC transporter spans 2 to 241; that stretch reads ISLDGIRKVF…PKEHITKEFV (240 aa). 38-45 contacts ATP; the sequence is GYSGAGKS.

This sequence belongs to the ABC transporter superfamily. Methionine importer (TC 3.A.1.24) family. In terms of assembly, the complex is composed of two ATP-binding proteins (MetN), two transmembrane proteins (MetI) and a solute-binding protein (MetQ).

The protein resides in the cell membrane. It carries out the reaction L-methionine(out) + ATP + H2O = L-methionine(in) + ADP + phosphate + H(+). It catalyses the reaction D-methionine(out) + ATP + H2O = D-methionine(in) + ADP + phosphate + H(+). Its function is as follows. Part of the ABC transporter complex MetNIQ involved in methionine import. Responsible for energy coupling to the transport system. This chain is Methionine import ATP-binding protein MetN, found in Halalkalibacterium halodurans (strain ATCC BAA-125 / DSM 18197 / FERM 7344 / JCM 9153 / C-125) (Bacillus halodurans).